The sequence spans 60 residues: Large ribosomal subunit protein bL32 (60 aa).

Over residues 1–16 the composition is skewed to basic residues; sequence MAVPRRKTSPSRRGMR. The disordered stretch occupies residues 1 to 60; sequence MAVPRRKTSPSRRGMRRSADAIKKPTYVEDKDSGELRRPHHLDLKTGMYKGRQVLKKKES. Over residues 17 to 44 the composition is skewed to basic and acidic residues; it reads RSADAIKKPTYVEDKDSGELRRPHHLDL.

It belongs to the bacterial ribosomal protein bL32 family.

The chain is Large ribosomal subunit protein bL32 from Bradyrhizobium diazoefficiens (strain JCM 10833 / BCRC 13528 / IAM 13628 / NBRC 14792 / USDA 110).